The primary structure comprises 251 residues: Sugar fermentation stimulation protein homolog (251 aa).

The protein belongs to the SfsA family.

This chain is Sugar fermentation stimulation protein homolog, found in Yersinia pseudotuberculosis serotype O:1b (strain IP 31758).